Consider the following 210-residue polypeptide: DNA-directed RNA polymerases I, II, and III subunit RPABC1 (210 aa).

Methionine 1 is modified (N-acetylmethionine). Lysine 81 is covalently cross-linked (Glycyl lysine isopeptide (Lys-Gly) (interchain with G-Cter in SUMO2)).

The protein belongs to the archaeal Rpo5/eukaryotic RPB5 RNA polymerase subunit family. As to quaternary structure, component of the RNA polymerase I (Pol I), RNA polymerase II (Pol II) and RNA polymerase III (Pol III) complexes consisting of at least 13, 12 and 17 subunits, respectively. Pol I complex consists of a ten-subunit catalytic core composed of POLR1A/RPA1, POLR1B/RPA2, POLR1C/RPAC1, POLR1D/RPAC2, POLR1H/RPA12, POLR2E/RPABC1, POLR2F/RPABC2, POLR2H/RPABC3, POLR2K/RPABC4 and POLR2L/RPABC5; a mobile stalk subunit POLR1F/RPA43 protruding from the core and additional subunits homologous to general transcription factors POLR1E/RPA49 and POLR1G/RPA34. Part of Pol I pre-initiation complex (PIC), in which Pol I core assembles with RRN3 and promoter-bound UTBF and SL1/TIF-IB complex. Pol II complex contains a ten-subunit catalytic core composed of POLR2A/RPB1, POLR2B/RPB2, POLR2C/RPB3, POLR2I/RPB9, POLR2J/RPB11, POLR2E/RPABC1, POLR2F/RPABC2, POLR2H/RPABC3, POLR2K/RPABC4 and POLR2L/RPABC5 and a mobile stalk composed of two subunits POLR2D/RPB4 and POLR2G/RPB7. Part of Pol II(G) complex, in which Pol II core associates with an additional subunit POLR2M; unlike conventional Pol II, Pol II(G) functions as a transcriptional repressor. Part of TBP-based Pol II pre-initiation complex (PIC), in which Pol II core assembles with general transcription factors and other specific initiation factors including GTF2E1, GTF2E2, GTF2F1, GTF2F2, TCEA1, ERCC2, ERCC3, GTF2H2, GTF2H3, GTF2H4, GTF2H5, GTF2A1, GTF2A2, GTF2B and TBP; this large multi-subunit PIC complex mediates DNA unwinding and targets Pol II core to the transcription start site where the first phosphodiester bond forms. In Pol II complex, this subunit is present in 2-fold molar excess over the other subunits. Pol III complex consists of a ten-subunit catalytic core composed of POLR3A/RPC1, POLR3B/RPC2, POLR1C/RPAC1, POLR1D/RPAC2, POLR3K/RPC10, POLR2E/RPABC1, POLR2F/RPABC2, POLR2H/RPABC3, POLR2K/RPABC4 and POLR2L/RPABC5; a mobile stalk composed of two subunits POLR3H/RPC8 and CRCP/RPC9, protruding from the core and functioning primarily in transcription initiation; and additional subunits homologous to general transcription factors of the RNA polymerase II machinery, POLR3C/RPC3-POLR3F/RPC6-POLR3G/RPC7 heterotrimer required for transcription initiation and POLR3D/RPC4-POLR3E/RPC5 heterodimer involved in both transcription initiation and termination. Component of the PAQosome complex which is responsible for the biogenesis of several protein complexes and which consists of R2TP complex members RUVBL1, RUVBL2, RPAP3 and PIH1D1, URI complex members PFDN2, PFDN6, PDRG1, UXT and URI1 as well as ASDURF, POLR2E and DNAAF10/WDR92. Interacts with URI1. (Microbial infection) Interacts with HBV protein X.

The protein resides in the nucleus. Its subcellular location is the nucleolus. Its function is as follows. DNA-dependent RNA polymerase catalyzes the transcription of DNA into RNA using the four ribonucleoside triphosphates as substrates. Common component of RNA polymerases I, II and III which synthesize ribosomal RNA precursors, mRNA precursors and many functional non-coding RNAs, and small RNAs, such as 5S rRNA and tRNAs, respectively. Pol II is the central component of the basal RNA polymerase II transcription machinery. Pols are composed of mobile elements that move relative to each other. In Pol II, POLR2E/RPABC1 is part of the lower jaw surrounding the central large cleft and thought to grab the incoming DNA template. The chain is DNA-directed RNA polymerases I, II, and III subunit RPABC1 from Homo sapiens (Human).